Reading from the N-terminus, the 429-residue chain is Chordin-like protein 2 (429 aa).

A signal peptide spans 1 to 25 (MVPEVRVLSSLLGLALLWFPLDSHA). VWFC domains follow at residues 31–96 (MFCL…PKCV) and 109–175 (KSCQ…QACK). Asn114 carries N-linked (GlcNAc...) asparagine glycosylation. Ser182 is modified (phosphoserine; by FAM20C). The disordered stretch occupies residues 182–224 (SDEEDSVQSLHGVRHPQDPCSSDAGRKRGPGTPAPTGLSAPLS). Positions 250-315 (KACVHGGKTY…VAGKCCKICP (66 aa)) constitute a VWFC 3 domain.

In terms of assembly, interacts with GDF5. May interact with BMP2, BMP4, BMP5, BMP6, BMP7 and INHBA. Phosphorylated by FAM20C in the extracellular medium. As to expression, highly expressed in uterus. Moderately expressed in heart, liver, prostate, testis and ovary. Weakly expressed in skeletal muscle, kidney, spleen, small intestine and colon. Expressed in the secretory epithelial cells of uterine endometrium, fallopian tubes, endocervical glands, bladder and prostate, as well as the transitional epithelium of the urinary bladder, and in bone osteoblasts (at protein level). In normal cartilage, expression was confined in a few chondrocytes in the superficial zone as well as in the middle zone. In diseased cartilage coming from osteoarthritic patients, expression was limited to the middle zone of chondrocytes. Isoform 1 and isoform 2 are expressed in fetal cerebellum and heart, while only isoform 2 is detected in fetal spleen. Isoform 2 present in plasma.

Its subcellular location is the secreted. The protein localises to the cytoplasm. Functionally, may inhibit BMPs activity by blocking their interaction with their receptors. Has a negative regulator effect on the cartilage formation/regeneration from immature mesenchymal cells, by preventing or reducing the rate of matrix accumulation. Implicated in tumor angiogenesis. May play a role during myoblast and osteoblast differentiation, and maturation. The protein is Chordin-like protein 2 (CHRDL2) of Homo sapiens (Human).